Consider the following 729-residue polypeptide: Leucine-rich repeat flightless-interacting protein 2 (729 aa).

The stretch at 27–69 (IAREAEARLAAKRAARAEARDIRMRELERQQKELTHRYHDKKW) forms a coiled coil. Disordered stretches follow at residues 80 to 156 (DHAR…SSSH), 230 to 268 (SARSSPVCSDDEGSVSYSSCRGRRDSVSSDFSDQSESAA), and 289 to 344 (IPDL…CSLD). Residues 84–93 (HLQRSSHRHS) are compositionally biased toward basic residues. Over residues 99–110 (VTPNHRSSSVDV) the composition is skewed to polar residues. Residues 115-126 (RGRESISRRRDS) are compositionally biased toward basic and acidic residues. 2 stretches are compositionally biased toward low complexity: residues 137 to 147 (RTSNSYSNSYD) and 257 to 268 (SSDFSDQSESAA). Over residues 304 to 320 (TTENYSRPSSRNATSGI) the composition is skewed to polar residues. 2 coiled-coil regions span residues 357-531 (DLKD…IGEK) and 574-722 (LDVR…KANR). The segment at 600–621 (DDERQKSAKNNSTTTDPTGLEN) is disordered. Residues 607 to 616 (AKNNSTTTDP) are compositionally biased toward polar residues.

The protein belongs to the LRRFIP family.

Functionally, may function as activator of the canonical Wnt signaling pathway upstream of ctnnb1/beta-catenin. Might be required for dorsal axis formation. The polypeptide is Leucine-rich repeat flightless-interacting protein 2 (lrrfip2) (Xenopus laevis (African clawed frog)).